Consider the following 392-residue polypeptide: MSLNPRDIVVVDAVRTAMAKAKHGAFRNVRAENLSAAVMQALFDRNANLVPAEVDDVIWGCVNQTLEQSMNIARNAAIMTGIPRTVPAQTVNRLCGSSMSALHIATANIKAGMGDFYIIGGVEHMEHVPMTHGVDVNPAASKYAAKAAMMMGLTAELLGKMHGVGREEQDAFGVRSHQRAQAANENGYFDNEIVGVEGHDADGFLRLIDRDEVIRQDANLEDMGKLKPVFDPKGGTVTAGTSSALSVGASALAVMSYERAQALGLEPLARVVSTGVAGCDASIMGYGPVPATQKALKSAGLAIDDIQTVELNEAFAAQSIPVLKDLGLRERMDDAVNLHGGAIALGHPLGCSGARICTTLLNVMRQQDTTLGLATMCIGMGQGVATVFERLK.

Cysteine 95 serves as the catalytic Acyl-thioester intermediate. Active-site proton acceptor residues include histidine 347 and cysteine 377.

The protein belongs to the thiolase-like superfamily. Thiolase family. As to quaternary structure, heterotetramer of two alpha chains (FadB) and two beta chains (FadA).

The protein resides in the cytoplasm. It carries out the reaction an acyl-CoA + acetyl-CoA = a 3-oxoacyl-CoA + CoA. It participates in lipid metabolism; fatty acid beta-oxidation. Catalyzes the final step of fatty acid oxidation in which acetyl-CoA is released and the CoA ester of a fatty acid two carbons shorter is formed. The protein is 3-ketoacyl-CoA thiolase of Chromohalobacter salexigens (strain ATCC BAA-138 / DSM 3043 / CIP 106854 / NCIMB 13768 / 1H11).